The following is a 361-amino-acid chain: Molybdenum import ATP-binding protein ModC (361 aa).

The 228-residue stretch at 1-228 folds into the ABC transporter domain; sequence MLTINIEKQL…EQMRPWVPLQ (228 aa). Position 31–38 (31–38) interacts with ATP; sequence GRSGAGKT. In terms of domain architecture, Mop spans 289-356; it reads RSSIRNVLKG…IKGVTMTQMD (68 aa).

Belongs to the ABC transporter superfamily. Molybdate importer (TC 3.A.1.8) family. As to quaternary structure, the complex is composed of two ATP-binding proteins (ModC), two transmembrane proteins (ModB) and a solute-binding protein (ModA).

It is found in the cell inner membrane. It catalyses the reaction molybdate(out) + ATP + H2O = molybdate(in) + ADP + phosphate + H(+). Part of the ABC transporter complex ModABC involved in molybdenum import. Responsible for energy coupling to the transport system. This Shewanella oneidensis (strain ATCC 700550 / JCM 31522 / CIP 106686 / LMG 19005 / NCIMB 14063 / MR-1) protein is Molybdenum import ATP-binding protein ModC.